The primary structure comprises 154 residues: Aminoalkylphosphonate N-acetyltransferase (154 aa).

One can recognise an N-acetyltransferase domain in the interval 14 to 154; it reads CELRHATTED…QSHFRFTKAL (141 aa).

As to quaternary structure, homodimer. Requires a divalent metal cation as cofactor.

The catalysed reaction is aminomethylphosphonate + acetyl-CoA = 2-N-acetamidomethylphosphonate + CoA. The enzyme catalyses (S)-1-aminoethylphosphonate + acetyl-CoA = [(1S)-1-acetamidoethyl]phosphonate + CoA. Its function is as follows. Aminoalkylphosphonate N-acetyltransferase which is able to acetylate a range of aminoalkylphosphonic acids, including (S)-1-aminoethylphosphonate ((S)-1AEP) and 2-aminoethylphosphonate, using acetyl-CoA as acetyl donor. Its physiological role in S.typhimurium is unclear. However, by acetylating (S)-1AEP, PhnO would protect against the deleterious effects of (S)-1AEP, a structural analog of D-alanine that has antibacterial properties. This Salmonella typhimurium (strain LT2 / SGSC1412 / ATCC 700720) protein is Aminoalkylphosphonate N-acetyltransferase.